A 432-amino-acid polypeptide reads, in one-letter code: Neuronal pentraxin-1 (432 aa).

Residues 1 to 22 (MLAGRAARTCALLALCLLGSGA) form the signal peptide. A disordered region spans residues 88-122 (RCESQSTLDSGPGEARSGGGRKQPGSGKNTMGDLS). N-linked (GlcNAc...) asparagine glycans are attached at residues asparagine 154 and asparagine 193. Residues 226–428 (DKFQLTFPLR…GATKWTFEAC (203 aa)) enclose the Pentraxin (PTX) domain. An intrachain disulfide couples cysteine 256 to cysteine 316. Ca(2+) is bound by residues asparagine 280, glutamate 358, glutamine 359, aspartate 360, and glutamine 370.

In terms of assembly, homooligomer or heterooligomer (probably pentamer) with neuronal pentraxin receptor (NPTXR). It depends on Ca(2+) as a cofactor. Expressed in brain and kidney.

It is found in the secreted. The protein localises to the cytoplasmic vesicle. It localises to the secretory vesicle. The protein resides in the endoplasmic reticulum. May be involved in mediating uptake of synaptic material during synapse remodeling or in mediating the synaptic clustering of AMPA glutamate receptors at a subset of excitatory synapses. The polypeptide is Neuronal pentraxin-1 (Nptx1) (Mus musculus (Mouse)).